The following is a 230-amino-acid chain: MSREESVSGANDVSSLYPPPPPYIKYFTSENVEKLKEYNERREEGESAENELDFLIPPPMPSSGSYRAFGSVWQIKDHLPDLETMGITQLYKKTSEGEAEVTDYQYKIKELRRLSYSLLLNFVELVGVLSVNPELYESKVENIRTILVNIHHLLNEYRPHQSRESLIMLLEEQLEHKKQEVANIELVCQQVTEKLKQVQTLLKESQSQSQSQSQSQSQSQSQSQLQSDSQ.

Disordered stretches follow at residues 1-22 (MSRE…PPPP) and 206-230 (QSQS…SDSQ).

Belongs to the Mediator complex subunit 7 family. Component of the Mediator complex.

The protein resides in the nucleus. Functionally, component of the Mediator complex, a coactivator involved in the regulated transcription of nearly all RNA polymerase II-dependent genes. Mediator functions as a bridge to convey information from gene-specific regulatory proteins to the basal RNA polymerase II transcription machinery. Mediator is recruited to promoters by direct interactions with regulatory proteins and serves as a scaffold for the assembly of a functional preinitiation complex with RNA polymerase II and the general transcription factors. This chain is Mediator of RNA polymerase II transcription subunit 7 (MED7), found in Candida glabrata (strain ATCC 2001 / BCRC 20586 / JCM 3761 / NBRC 0622 / NRRL Y-65 / CBS 138) (Yeast).